We begin with the raw amino-acid sequence, 289 residues long: Mas-related G-protein coupled receptor member G (289 aa).

Residues 1 to 13 are Extracellular-facing; the sequence is MLSIFNIWGTFNR. A helical transmembrane segment spans residues 14 to 34; the sequence is VLFFLSLTVSLAGLAGNTLLL. Residues 35–49 lie on the Cytoplasmic side of the membrane; the sequence is WHLGLRIKKGPFNTY. Residues 50 to 70 traverse the membrane as a helical segment; it reads LLHLAAADFLFLSCQVGFSIA. At 71 to 80 the chain is on the extracellular side; sequence KIASGYEDTL. The chain crosses the membrane as a helical span at residues 81-101; that stretch reads YFPVTFLWFAVGLWLLAAFIV. The Cytoplasmic segment spans residues 102 to 123; sequence DCCLSYMFPSFCGPNCRPRYTS. The helical transmembrane segment at 124–144 threads the bilayer; sequence FVLCLVIWALTMLAVLLPANA. The Extracellular portion of the chain corresponds to 145–164; the sequence is CGLLYNRMSLLVCLKYHWVS. Residues 165–185 form a helical membrane-spanning segment; sequence VVWLGVLASTACGASMFLLVF. At 186 to 200 the chain is on the cytoplasmic side; the sequence is GNCCSSQPPSKFCKL. A helical transmembrane segment spans residues 201–221; that stretch reads AQCSGILLFFCRLPLVFYWCL. Position 222 (R222) is a topological domain, extracellular. A helical transmembrane segment spans residues 223-243; the sequence is PVIKFLLPFFFPLATLLACID. Over 244-289 the chain is Cytoplasmic; that stretch reads SSAKPLLYYLKGRQLRKEPLQVALNRALGEESQSSSGGISLPMSRV.

This sequence belongs to the G-protein coupled receptor 1 family. Mas subfamily.

It localises to the cell membrane. Its function is as follows. Orphan receptor. May regulate nociceptor function and/or development, including the sensation or modulation of pain. The sequence is that of Mas-related G-protein coupled receptor member G (Mrgprg) from Rattus norvegicus (Rat).